The chain runs to 625 residues: DELLA protein SLR1 (625 aa).

Positions 1–34 (MKREYQEAGGSSGGGSSADMGSCKDKVMAGAAGE) are disordered. Residues 39–43 (DELLA) carry the DELLA motif motif. The disordered stretch occupies residues 167 to 208 (TADPSAADSARDTKRMRTGGGSTSSSSSSSSSLGGGASRGSV). The segment covering 189–198 (TSSSSSSSSS) has biased composition (low complexity). In terms of domain architecture, GRAS spans 232 to 621 (VDTQEAGIRL…RPLIATSAWR (390 aa)). Residues 239 to 294 (IRLVHALLACAEAVQQENFAAAEALVKQIPTLAASQGGAMRKVAAYFGEALARRVY) are leucine repeat I (LRI). Positions 241 to 278 (LVHALLACAEAVQQENFAAAEALVKQIPTLAASQGGAM) are required for possible homodimerization. The LxCxE motif motif lies at 246–250 (LACAE). Residues 313 to 378 (HAHFYESCPY…GGPPSFRLTG (66 aa)) are VHIID. The VHIID motif lies at 344-348 (VHVVD). The segment at 392–431 (QVGWKLAQFAHTIRVDFQYRGLVAATLADLEPFMLQPEGE) is leucine repeat II (LRII). Positions 441-542 (IAVNSVFELH…EVYLGRQICN (102 aa)) are PFYRE. Positions 449-453 (LHRLL) match the LXXLL motif motif. The tract at residues 545–621 (ACEGAERTER…RPLIATSAWR (77 aa)) is SAW.

The protein belongs to the GRAS family. DELLA subfamily.

Probable transcriptional regulator that acts as a repressor of the gibberellin (GA) signaling pathway. Probably acts by participating in large multiprotein complexes that repress transcription of GA-inducible genes. Upon GA application, it is degraded by the proteasome, allowing the GA signaling pathway. In contrast, its overexpression prevents the GA signaling pathway and induces a dwarf phenotype. The polypeptide is DELLA protein SLR1 (Oryza sativa subsp. indica (Rice)).